Here is a 92-residue protein sequence, read N- to C-terminus: Small nuclear ribonucleoprotein E (92 aa).

The 75-residue stretch at 18 to 92 (INLIFRYLQN…NITLLQSVSN (75 aa)) folds into the Sm domain.

This sequence belongs to the snRNP Sm proteins family. Core component of the spliceosomal U1, U2, U4 and U5 small nuclear ribonucleoproteins (snRNPs), the building blocks of the spliceosome. Most spliceosomal snRNPs contain a common set of Sm proteins, SNRPB, SNRPD1, SNRPD2, SNRPD3, SNRPE, SNRPF and SNRPG that assemble in a heptameric protein ring on the Sm site of the small nuclear RNA to form the core snRNP. Component of the U1 snRNP. The U1 snRNP is composed of the U1 snRNA and the 7 core Sm proteins SNRPB, SNRPD1, SNRPD2, SNRPD3, SNRPE, SNRPF and SNRPG, and at least three U1 snRNP-specific proteins SNRNP70/U1-70K, SNRPA/U1-A and SNRPC/U1-C. Component of the U4/U6-U5 tri-snRNP complex composed of the U4, U6 and U5 snRNAs and at least PRPF3, PRPF4, PRPF6, PRPF8, PRPF31, SNRNP200, TXNL4A, SNRNP40, SNRPB, SNRPD1, SNRPD2, SNRPD3, SNRPE, SNRPF, SNRPG, DDX23, CD2BP2, PPIH, SNU13, EFTUD2, SART1 and USP39, plus LSM2, LSM3, LSM4, LSM5, LSM6, LSM7 and LSM8. Component of the U7 snRNP complex, or U7 Sm protein core complex, that is composed of the U7 snRNA and at least LSM10, LSM11, SNRPB, SNRPD3, SNRPE, SNRPF and SNRPG; the complex does not contain SNRPD1 and SNRPD2. Component of the minor spliceosome, which splices U12-type introns. Part of the SMN-Sm complex that contains SMN1, GEMIN2/SIP1, DDX20/GEMIN3, GEMIN4, GEMIN5, GEMIN6, GEMIN7, GEMIN8, STRAP/UNRIP and the Sm proteins SNRPB, SNRPD1, SNRPD2, SNRPD3, SNRPE, SNRPF and SNRPG; catalyzes core snRNPs assembly. Forms a 6S pICln-Sm complex composed of CLNS1A/pICln, SNRPD1, SNRPD2, SNRPE, SNRPF and SNRPG; ring-like structure where CLNS1A/pICln mimics additional Sm proteins and which is unable to assemble into the core snRNP. Interacts with SMN1; the interaction is direct. Interacts with GEMIN2 (via N-terminus); the interaction is direct. Interacts with SNRPF; the interaction is direct. Interacts with SNRPG; the interaction is direct.

It localises to the cytoplasm. It is found in the cytosol. The protein resides in the nucleus. Plays a role in pre-mRNA splicing as a core component of the spliceosomal U1, U2, U4 and U5 small nuclear ribonucleoproteins (snRNPs), the building blocks of the spliceosome. Component of both the pre-catalytic spliceosome B complex and activated spliceosome C complexes. As a component of the minor spliceosome, involved in the splicing of U12-type introns in pre-mRNAs. As part of the U7 snRNP it is involved in histone 3'-end processing. The polypeptide is Small nuclear ribonucleoprotein E (SNRPE) (Bos taurus (Bovine)).